The chain runs to 413 residues: Tryptophan synthase beta chain (413 aa).

Lys-107 is modified (N6-(pyridoxal phosphate)lysine).

This sequence belongs to the TrpB family. As to quaternary structure, tetramer of two alpha and two beta chains. Pyridoxal 5'-phosphate is required as a cofactor.

The enzyme catalyses (1S,2R)-1-C-(indol-3-yl)glycerol 3-phosphate + L-serine = D-glyceraldehyde 3-phosphate + L-tryptophan + H2O. Its pathway is amino-acid biosynthesis; L-tryptophan biosynthesis; L-tryptophan from chorismate: step 5/5. The beta subunit is responsible for the synthesis of L-tryptophan from indole and L-serine. The polypeptide is Tryptophan synthase beta chain (Trichormus variabilis (strain ATCC 29413 / PCC 7937) (Anabaena variabilis)).